The chain runs to 455 residues: Phosphoglucosamine mutase (455 aa).

The active-site Phosphoserine intermediate is Ser-106. Ser-106, Asp-245, Asp-247, and Asp-249 together coordinate Mg(2+). Ser-106 carries the phosphoserine modification.

It belongs to the phosphohexose mutase family. Requires Mg(2+) as cofactor. In terms of processing, activated by phosphorylation.

It carries out the reaction alpha-D-glucosamine 1-phosphate = D-glucosamine 6-phosphate. In terms of biological role, catalyzes the conversion of glucosamine-6-phosphate to glucosamine-1-phosphate. The chain is Phosphoglucosamine mutase from Acaryochloris marina (strain MBIC 11017).